The primary structure comprises 172 residues: Large ribosomal subunit protein uL5 (172 aa).

It belongs to the universal ribosomal protein uL5 family. Part of the 50S ribosomal subunit; contacts the 5S rRNA and probably tRNA. Forms a bridge to the 30S subunit in the 70S ribosome.

This is one of the proteins that bind and probably mediate the attachment of the 5S RNA into the large ribosomal subunit, where it forms part of the central protuberance. In the 70S ribosome it contacts protein S13 of the 30S subunit (bridge B1b), connecting the 2 subunits; this bridge is implicated in subunit movement. May contact the P site tRNA; the 5S rRNA and some of its associated proteins might help stabilize positioning of ribosome-bound tRNAs. This is Large ribosomal subunit protein uL5 from Haloferax mediterranei (strain ATCC 33500 / DSM 1411 / JCM 8866 / NBRC 14739 / NCIMB 2177 / R-4) (Halobacterium mediterranei).